The following is a 236-amino-acid chain: Ribose-5-phosphate isomerase A (236 aa).

Substrate contacts are provided by residues 31-34, 88-91, and 101-104; these read TGST, DGAD, and KGGG. The active-site Proton acceptor is the E110. K128 contributes to the substrate binding site.

This sequence belongs to the ribose 5-phosphate isomerase family. Homodimer.

It carries out the reaction aldehydo-D-ribose 5-phosphate = D-ribulose 5-phosphate. It functions in the pathway carbohydrate degradation; pentose phosphate pathway; D-ribose 5-phosphate from D-ribulose 5-phosphate (non-oxidative stage): step 1/1. Catalyzes the reversible conversion of ribose-5-phosphate to ribulose 5-phosphate. This Thermosynechococcus vestitus (strain NIES-2133 / IAM M-273 / BP-1) protein is Ribose-5-phosphate isomerase A.